Reading from the N-terminus, the 429-residue chain is Enolase (429 aa).

Residue Gln162 coordinates (2R)-2-phosphoglycerate. Glu204 serves as the catalytic Proton donor. 3 residues coordinate Mg(2+): Asp241, Glu283, and Asp310. (2R)-2-phosphoglycerate-binding residues include Lys335, Arg364, Ser365, and Lys386. Lys335 serves as the catalytic Proton acceptor.

Belongs to the enolase family. Mg(2+) is required as a cofactor.

The protein localises to the cytoplasm. It is found in the secreted. Its subcellular location is the cell surface. It carries out the reaction (2R)-2-phosphoglycerate = phosphoenolpyruvate + H2O. The protein operates within carbohydrate degradation; glycolysis; pyruvate from D-glyceraldehyde 3-phosphate: step 4/5. In terms of biological role, catalyzes the reversible conversion of 2-phosphoglycerate (2-PG) into phosphoenolpyruvate (PEP). It is essential for the degradation of carbohydrates via glycolysis. This is Enolase from Mycobacterium sp. (strain JLS).